The following is a 146-amino-acid chain: Hemoglobin subunit delta (146 aa).

In terms of domain architecture, Globin spans 2-146; it reads HLTGDEKSAV…VATALAHKYH (145 aa). At S50 the chain carries Phosphoserine. Residues H63 and H92 each contribute to the heme b site.

The protein belongs to the globin family. Heterotetramer of two delta chains and two alpha chains. Red blood cells.

In Aotus trivirgatus (Three-striped night monkey), this protein is Hemoglobin subunit delta (HBD).